The sequence spans 288 residues: GTP-binding protein 8 (288 aa).

One can recognise an EngB-type G domain in the interval 109–282 (HRPEVCFIGR…RCFIADITGN (174 aa)). GTP-binding positions include 117–124 (GRSNVGKS), 146–150 (GHTKK), 164–167 (DMPG), 226–229 (TKID), and 261–263 (VSA). Residues serine 124 and threonine 148 each contribute to the Mg(2+) site.

Belongs to the TRAFAC class TrmE-Era-EngA-EngB-Septin-like GTPase superfamily. EngB GTPase family. The cofactor is Mg(2+).

This chain is GTP-binding protein 8 (GTPBP8), found in Bos taurus (Bovine).